The following is a 311-amino-acid chain: Serine/threonine-protein phosphatase 4 catalytic subunit A (311 aa).

Residues Asp58, His60, Asp86, and Asn118 each contribute to the Mn(2+) site. The active-site Proton donor is His119. 2 residues coordinate Mn(2+): His168 and His242. Leu311 carries the post-translational modification Leucine methyl ester.

Belongs to the PPP phosphatase family. PP-4 (PP-X) subfamily. As to quaternary structure, serine/threonine-protein phosphatase 4 (PP4) occurs in different assemblies of the catalytic and one or more regulatory subunits. It depends on Mn(2+) as a cofactor.

It is found in the cytoplasm. The protein resides in the cytoskeleton. It localises to the microtubule organizing center. The protein localises to the centrosome. The enzyme catalyses O-phospho-L-seryl-[protein] + H2O = L-seryl-[protein] + phosphate. It carries out the reaction O-phospho-L-threonyl-[protein] + H2O = L-threonyl-[protein] + phosphate. Protein phosphatase that regulates many processes such as microtubule organization at centrosomes. The polypeptide is Serine/threonine-protein phosphatase 4 catalytic subunit A (ppp4ca) (Danio rerio (Zebrafish)).